The primary structure comprises 450 residues: UDP-N-acetylmuramoylalanine--D-glutamate ligase (450 aa).

Gly119–Thr125 is an ATP binding site.

This sequence belongs to the MurCDEF family.

The protein resides in the cytoplasm. It catalyses the reaction UDP-N-acetyl-alpha-D-muramoyl-L-alanine + D-glutamate + ATP = UDP-N-acetyl-alpha-D-muramoyl-L-alanyl-D-glutamate + ADP + phosphate + H(+). It participates in cell wall biogenesis; peptidoglycan biosynthesis. In terms of biological role, cell wall formation. Catalyzes the addition of glutamate to the nucleotide precursor UDP-N-acetylmuramoyl-L-alanine (UMA). The chain is UDP-N-acetylmuramoylalanine--D-glutamate ligase from Bacillus cereus (strain AH187).